Reading from the N-terminus, the 147-residue chain is Succinate dehydrogenase assembly factor 2, mitochondrial (147 aa).

The protein belongs to the SDHAF2 family. In terms of assembly, interacts with the flavoprotein subunit within the SDH catalytic dimer.

It is found in the mitochondrion matrix. In terms of biological role, plays an essential role in the assembly of succinate dehydrogenase (SDH), an enzyme complex (also referred to as respiratory complex II) that is a component of both the tricarboxylic acid (TCA) cycle and the mitochondrial electron transport chain, and which couples the oxidation of succinate to fumarate with the reduction of ubiquinone (coenzyme Q) to ubiquinol. Required for flavinylation (covalent attachment of FAD) of the flavoprotein subunit of the SDH catalytic dimer. This Drosophila grimshawi (Hawaiian fruit fly) protein is Succinate dehydrogenase assembly factor 2, mitochondrial.